The sequence spans 237 residues: Probable Bax inhibitor 1 (237 aa).

Residues 1–29 (MNVFDRNINFDSLFKFSQISHSTQVHLKN) are Cytoplasmic-facing. A helical membrane pass occupies residues 30–50 (VYSSLAVCMFVAAAGSYVHVV). Residues 51 to 52 (TR) lie on the Lumenal side of the membrane. A helical transmembrane segment spans residues 53–73 (LFQGGMLSVLGSLGMMFWLAM). The Cytoplasmic segment spans residues 74–86 (TPHNSETEKKRLA). Residues 87-107 (ILAGFAFLTGVGLCPTLDFVI) traverse the membrane as a helical segment. At 108 to 112 (AINPS) the chain is on the lumenal side. Residues 113 to 133 (IIVTAFLGTSVIFVCFTLSAL) traverse the membrane as a helical segment. Topologically, residues 134 to 139 (YAKRRS) are cytoplasmic. Residues 140 to 160 (YLFLGGTLMSGLSILFLMSMM) form a helical membrane-spanning segment. The Lumenal segment spans residues 161-166 (NMFFGS). The chain crosses the membrane as a helical span at residues 167–187 (VMLFKAHMYLGLLIMCGFVLX). Topologically, residues 188–206 (DTQLIIEKAENGDKDYVWH) are cytoplasmic. Positions 207 to 227 (SVDLFLDFITIFRKLMVILAL) form an intramembrane region, helical. The Cytoplasmic segment spans residues 228–237 (NDKDKKKEKK).

It belongs to the BI1 family. As to expression, highly abundant in testis.

The protein resides in the endoplasmic reticulum membrane. Functionally, suppressor of apoptosis. Modulates unfolded protein response signaling. Modulate ER calcium homeostasis by acting as a calcium-leak channel. This Paralichthys olivaceus (Bastard halibut) protein is Probable Bax inhibitor 1 (tmbim6).